Here is a 264-residue protein sequence, read N- to C-terminus: MSNILTKIIAWKVEEIAERLLHVSQAELVARCADLPTPRGFAGALQATIAHGDPAVIAEIKKASPSKGVLREDFRPAEIAISYELGGASCLSVLTDVHFFKGHDDYLSQARDACTLPVLRKDFTIDPYQVYEARVLGADCILLIVAALDDAQLVDLSGLALQLGMDVLVEVHDIDELERAIQISAPLIGINNRNLSTFNVSLETTLTMKGLVPRDRLLVSESGILTSADVQRLRAAGVNAFLVGEAFMRATEPGESLREMFFIT.

It belongs to the TrpC family.

The enzyme catalyses 1-(2-carboxyphenylamino)-1-deoxy-D-ribulose 5-phosphate + H(+) = (1S,2R)-1-C-(indol-3-yl)glycerol 3-phosphate + CO2 + H2O. It participates in amino-acid biosynthesis; L-tryptophan biosynthesis; L-tryptophan from chorismate: step 4/5. The sequence is that of Indole-3-glycerol phosphate synthase from Xylella fastidiosa (strain 9a5c).